The primary structure comprises 101 residues: YcgL domain-containing protein ACIAD2309 (101 aa).

The region spanning 1-93 (MHCDIYRSSK…PPEGFINPSD (93 aa)) is the YcgL domain.

The polypeptide is YcgL domain-containing protein ACIAD2309 (Acinetobacter baylyi (strain ATCC 33305 / BD413 / ADP1)).